The sequence spans 338 residues: Glyceraldehyde-3-phosphate dehydrogenase, cytosolic (338 aa).

NAD(+) is bound by residues 14–15, Asp36, and Arg83; that span reads RI. D-glyceraldehyde 3-phosphate-binding positions include 154–156, Thr185, 214–215, and Arg237; these read SCT and TG. Residue Cys155 is the Nucleophile of the active site. Asn319 provides a ligand contact to NAD(+).

This sequence belongs to the glyceraldehyde-3-phosphate dehydrogenase family. Homotetramer.

The protein resides in the cytoplasm. The enzyme catalyses D-glyceraldehyde 3-phosphate + phosphate + NAD(+) = (2R)-3-phospho-glyceroyl phosphate + NADH + H(+). The protein operates within carbohydrate degradation; glycolysis; pyruvate from D-glyceraldehyde 3-phosphate: step 1/5. In terms of biological role, key enzyme in glycolysis that catalyzes the first step of the pathway by converting D-glyceraldehyde 3-phosphate (G3P) into 3-phospho-D-glyceroyl phosphate. Essential for the maintenance of cellular ATP levels and carbohydrate metabolism. This chain is Glyceraldehyde-3-phosphate dehydrogenase, cytosolic (GAPC), found in Ranunculus acris (Meadow buttercup).